We begin with the raw amino-acid sequence, 149 residues long: Large ribosomal subunit protein bL9 (149 aa).

Belongs to the bacterial ribosomal protein bL9 family.

In terms of biological role, binds to the 23S rRNA. This chain is Large ribosomal subunit protein bL9, found in Anaeromyxobacter dehalogenans (strain 2CP-C).